A 549-amino-acid chain; its full sequence is FMRFamide receptor (549 aa).

Topologically, residues 1 to 117 (MSGTAVARLL…NNRIEFWVCG (117 aa)) are extracellular. Residues Asn59, Asn70, and Asn93 are each glycosylated (N-linked (GlcNAc...) asparagine). The chain crosses the membrane as a helical span at residues 118 to 138 (VLINIVGVLGILGNIISMIIL). Residues 139–158 (SRPQMRSSINYLLTGLARCD) lie on the Cytoplasmic side of the membrane. Residues 159–179 (TVLIITSILLFGIPSIYPYTG) form a helical membrane-spanning segment. Topologically, residues 180 to 181 (HF) are extracellular. A helical membrane pass occupies residues 182–202 (FGYYNYVYPFISPAVFPIGMI). The Cytoplasmic segment spans residues 203–238 (AQTASIYMTFTVTLERYVAVCHPLKARALCTYGRAK). A helical transmembrane segment spans residues 239-259 (IYFIVCVCFSLAYNMPRFWEV). Residues 260–289 (LTVTYPEPGKDVILHCVRPSRLRRSETYIN) are Extracellular-facing. The chain crosses the membrane as a helical span at residues 290 to 310 (IYIHWCYLIVNYIIPFLTLAI). Residues 311–341 (LNCLIYRQVKRANRERQRLSRSEKREIGLAT) lie on the Cytoplasmic side of the membrane. Residues 342-362 (MLLCVVIVFFMLNFLPLVLNI) form a helical membrane-spanning segment. At 363-376 (SEAFYSTIDHKITK) the chain is on the extracellular side. The helical transmembrane segment at 377–397 (ISNLLITINSSVNFLIYIIFG) threads the bilayer. Over 398-549 (EKFKRIFLLI…KKLGHVSSGF (152 aa)) the chain is Cytoplasmic.

This sequence belongs to the G-protein coupled receptor 1 family. In terms of tissue distribution, expressed in ovaries, heads and bodies. Expressed in dopaminergic neurons.

Its subcellular location is the cell membrane. A receptor for the FMRFamide peptides. Reacts with high affinity to FMRFamide and intrinsic FMRFamide-related peptides. By stimulating intracellular calcium signaling through the inositol 1,4,5-trisphosphate receptor, Itpr, in dopaminergic neurons, may be involved in the maintenance of neuronal excitability and in the regulation of flight bout duration. The protein is FMRFamide receptor of Drosophila melanogaster (Fruit fly).